The sequence spans 591 residues: MSDSDPKPTAAKGAAPTSIPNSTRNPNPTPPNPNPNPNPISTPAPTPTATPSPPIASSSNNGNNSTRSTNIDTNNNTNNAFFQAQQRIAARREAREAAAAARQATQQSASRLRARIAASQSPLLRRLGTSTLSLWDTLTSREGTRPAFRVGQVDAELLDEELVELLRGQVREALRYVGGGGGGGGGGGGGGVGSGVAQDWEAEISLALRAVLFKLTVWDHDATYGAALQNLKYTDARRDGPALAPPSRWQKALYGLVTVGGRYLWAKWEDWLLEQDDGFEGPSPRVKRLARWTSALSTLHASAALVSFLVFLLHGRYRTLLDRLLRMRLAPPTSQVSREVSFEYLNRQLVWHAFTEFLLFVLPLVGINRWRRWLARTWRRTKKIMTADADGGAGDKKGEYSFLPERTCAICYRDQNSASSETELLAAASGGVVGSAQTDITNPYEAIPCGCTYCFVCLATRIEREEGEGWPCLRCGELIKECKPWNGDVLEEPQVKSSPATTKTVVFADDVKAPSDHEEEENEEEEEQQGELGENEGESSQVLVEADPDGGLNDLRPETPSVSSDQADDSRGSESEDYEAEEDGLDEDPES.

The tract at residues 1-78 (MSDSDPKPTA…TNIDTNNNTN (78 aa)) is disordered. Residues 1-148 (MSDSDPKPTA…TSREGTRPAF (148 aa)) lie on the Peroxisomal matrix side of the membrane. Low complexity predominate over residues 7–26 (KPTAAKGAAPTSIPNSTRNP). The span at 27 to 54 (NPTPPNPNPNPNPISTPAPTPTATPSPP) shows a compositional bias: pro residues. The span at 55–78 (IASSSNNGNNSTRSTNIDTNNNTN) shows a compositional bias: low complexity. A helical transmembrane segment spans residues 149–175 (RVGQVDAELLDEELVELLRGQVREALR). Over 176 to 196 (YVGGGGGGGGGGGGGGVGSGV) the chain is Cytoplasmic. Residues 197–222 (AQDWEAEISLALRAVLFKLTVWDHDA) form a helical membrane-spanning segment. Residues 223-246 (TYGAALQNLKYTDARRDGPALAPP) are Peroxisomal matrix-facing. A helical membrane pass occupies residues 247-273 (SRWQKALYGLVTVGGRYLWAKWEDWLL). Topologically, residues 274 to 283 (EQDDGFEGPS) are cytoplasmic. The chain crosses the membrane as a helical span at residues 284-314 (PRVKRLARWTSALSTLHASAALVSFLVFLLH). The Peroxisomal matrix segment spans residues 315-341 (GRYRTLLDRLLRMRLAPPTSQVSREVS). Residues 342 to 365 (FEYLNRQLVWHAFTEFLLFVLPLV) traverse the membrane as a helical segment. Residues 366 to 591 (GINRWRRWLA…EDGLDEDPES (226 aa)) lie on the Cytoplasmic side of the membrane. Residues Cys408, Cys411, Cys449, Cys451, Cys454, Cys457, Cys472, and Cys475 each coordinate Zn(2+). The RING-type; atypical zinc finger occupies 408–475 (CAICYRDQNS…EGEGWPCLRC (68 aa)). Positions 512-591 (KAPSDHEEEE…EDGLDEDPES (80 aa)) are disordered. Composition is skewed to acidic residues over residues 517 to 537 (HEEE…ENEG) and 575 to 591 (SEDY…DPES).

The protein belongs to the pex2/pex10/pex12 family. As to quaternary structure, component of the PEX2-PEX10-PEX12 retrotranslocation channel, composed of PEX2, PEX10 and PEX12.

The protein localises to the peroxisome membrane. The enzyme catalyses [E2 ubiquitin-conjugating enzyme]-S-ubiquitinyl-L-cysteine + [acceptor protein]-L-cysteine = [E2 ubiquitin-conjugating enzyme]-L-cysteine + [acceptor protein]-S-ubiquitinyl-L-cysteine.. It functions in the pathway protein modification; protein ubiquitination. Its function is as follows. E3 ubiquitin-protein ligase component of a retrotranslocation channel required for peroxisome organization by mediating export of the PEX5 receptor from peroxisomes to the cytosol, thereby promoting PEX5 recycling. The retrotranslocation channel is composed of PEX2, PEX10 and PEX12; each subunit contributing transmembrane segments that coassemble into an open channel that specifically allows the passage of PEX5 through the peroxisomal membrane. PEX2 also regulates peroxisome organization by acting as a E3 ubiquitin-protein ligase. PEX2 ubiquitinates PEX5 during its passage through the retrotranslocation channel: catalyzes monoubiquitination of PEX5 at 'Cys-6', a modification that acts as a signal for PEX5 extraction into the cytosol. The sequence is that of Peroxisome assembly protein 2 from Thermothelomyces thermophilus (strain ATCC 42464 / BCRC 31852 / DSM 1799) (Sporotrichum thermophile).